Here is a 541-residue protein sequence, read N- to C-terminus: Phosphoenolpyruvate carboxykinase (ATP) (541 aa).

Gly243–Thr250 lines the ATP pocket.

Belongs to the phosphoenolpyruvate carboxykinase (ATP) family.

The enzyme catalyses oxaloacetate + ATP = phosphoenolpyruvate + ADP + CO2. It functions in the pathway carbohydrate biosynthesis; gluconeogenesis. This is Phosphoenolpyruvate carboxykinase (ATP) (PCK1) from Eremothecium gossypii (strain ATCC 10895 / CBS 109.51 / FGSC 9923 / NRRL Y-1056) (Yeast).